Reading from the N-terminus, the 173-residue chain is Shikimate kinase 1 (173 aa).

14–19 is an ATP binding site; sequence GAGKST. A Mg(2+)-binding site is contributed by S18. 3 residues coordinate substrate: D36, R60, and G82. R120 serves as a coordination point for ATP. R140 provides a ligand contact to substrate. Position 157 (Q157) interacts with ATP.

Belongs to the shikimate kinase family. As to quaternary structure, monomer. It depends on Mg(2+) as a cofactor.

It localises to the cytoplasm. The enzyme catalyses shikimate + ATP = 3-phosphoshikimate + ADP + H(+). It functions in the pathway metabolic intermediate biosynthesis; chorismate biosynthesis; chorismate from D-erythrose 4-phosphate and phosphoenolpyruvate: step 5/7. Catalyzes the specific phosphorylation of the 3-hydroxyl group of shikimic acid using ATP as a cosubstrate. This chain is Shikimate kinase 1, found in Enterobacter sp. (strain 638).